Here is a 753-residue protein sequence, read N- to C-terminus: 5-methyltetrahydropteroyltriglutamate--homocysteine methyltransferase (753 aa).

5-methyltetrahydropteroyltri-L-glutamate-binding positions include 17–20 (RELK) and Lys117. Residues 431 to 433 (IGS) and Glu484 each bind L-homocysteine. L-methionine-binding positions include 431-433 (IGS) and Glu484. 5-methyltetrahydropteroyltri-L-glutamate contacts are provided by residues 515–516 (RC) and Trp561. Asp599 contributes to the L-homocysteine binding site. Position 599 (Asp599) interacts with L-methionine. Glu605 lines the 5-methyltetrahydropteroyltri-L-glutamate pocket. Zn(2+) contacts are provided by His641, Cys643, and Glu665. Catalysis depends on His694, which acts as the Proton donor. Cys726 serves as a coordination point for Zn(2+).

Belongs to the vitamin-B12 independent methionine synthase family. Zn(2+) is required as a cofactor.

It catalyses the reaction 5-methyltetrahydropteroyltri-L-glutamate + L-homocysteine = tetrahydropteroyltri-L-glutamate + L-methionine. It functions in the pathway amino-acid biosynthesis; L-methionine biosynthesis via de novo pathway; L-methionine from L-homocysteine (MetE route): step 1/1. Its function is as follows. Catalyzes the transfer of a methyl group from 5-methyltetrahydrofolate to homocysteine resulting in methionine formation. This Escherichia fergusonii (strain ATCC 35469 / DSM 13698 / CCUG 18766 / IAM 14443 / JCM 21226 / LMG 7866 / NBRC 102419 / NCTC 12128 / CDC 0568-73) protein is 5-methyltetrahydropteroyltriglutamate--homocysteine methyltransferase.